Reading from the N-terminus, the 349-residue chain is 4-hydroxy-3-methylbut-2-en-1-yl diphosphate synthase (flavodoxin) (349 aa).

Residues cysteine 264, cysteine 267, cysteine 299, and glutamate 306 each coordinate [4Fe-4S] cluster.

This sequence belongs to the IspG family. The cofactor is [4Fe-4S] cluster.

The enzyme catalyses (2E)-4-hydroxy-3-methylbut-2-enyl diphosphate + oxidized [flavodoxin] + H2O + 2 H(+) = 2-C-methyl-D-erythritol 2,4-cyclic diphosphate + reduced [flavodoxin]. It participates in isoprenoid biosynthesis; isopentenyl diphosphate biosynthesis via DXP pathway; isopentenyl diphosphate from 1-deoxy-D-xylulose 5-phosphate: step 5/6. In terms of biological role, converts 2C-methyl-D-erythritol 2,4-cyclodiphosphate (ME-2,4cPP) into 1-hydroxy-2-methyl-2-(E)-butenyl 4-diphosphate. This is 4-hydroxy-3-methylbut-2-en-1-yl diphosphate synthase (flavodoxin) from Clostridium tetani (strain Massachusetts / E88).